The chain runs to 251 residues: Tropomyosin-2 (251 aa).

The stretch at 1 to 251 (MSGEEKLGKL…DTVADEPDDE (251 aa)) forms a coiled coil.

The protein belongs to the tropomyosin family. As to quaternary structure, homodimer. As to expression, striated muscle specific.

The polypeptide is Tropomyosin-2 (TPM2) (Podocoryna carnea (Hydrozoan)).